We begin with the raw amino-acid sequence, 141 residues long: Lutropin subunit beta (141 aa).

The N-terminal stretch at 1-20 is a signal peptide; it reads MEMLQGLLLWLLLNVGGVWA. Disulfide bonds link C29–C77, C43–C92, C46–C130, C54–C108, C58–C110, and C113–C120. An N-linked (GlcNAc...) asparagine glycan is attached at N33.

Belongs to the glycoprotein hormones subunit beta family. As to quaternary structure, heterodimer of a common alpha chain and a unique beta chain which confers biological specificity to thyrotropin, lutropin, follitropin and gonadotropin.

It localises to the secreted. Functionally, promotes spermatogenesis and ovulation by stimulating the testes and ovaries to synthesize steroids. The polypeptide is Lutropin subunit beta (LHB) (Ailurus fulgens (Himalayan red panda)).